The following is a 349-amino-acid chain: Phenylalanine--tRNA ligase alpha subunit (349 aa).

Mg(2+) is bound at residue glutamate 259.

Belongs to the class-II aminoacyl-tRNA synthetase family. Phe-tRNA synthetase alpha subunit type 1 subfamily. Tetramer of two alpha and two beta subunits. The cofactor is Mg(2+).

The protein resides in the cytoplasm. The enzyme catalyses tRNA(Phe) + L-phenylalanine + ATP = L-phenylalanyl-tRNA(Phe) + AMP + diphosphate + H(+). The chain is Phenylalanine--tRNA ligase alpha subunit from Lactobacillus acidophilus (strain ATCC 700396 / NCK56 / N2 / NCFM).